A 335-amino-acid polypeptide reads, in one-letter code: Holliday junction branch migration complex subunit RuvB (335 aa).

A large ATPase domain (RuvB-L) region spans residues 1–181; it reads MDRIVEIEKY…FGMQFRLEFY (181 aa). ATP contacts are provided by residues leucine 20, arginine 21, glycine 62, lysine 65, threonine 66, threonine 67, 128–130, arginine 171, tyrosine 181, and arginine 218; that span reads EDY. Mg(2+) is bound at residue threonine 66. The segment at 182 to 252 is small ATPAse domain (RuvB-S); that stretch reads KDSELALILQ…RANEALNSLG (71 aa). The segment at 255–335 is head domain (RuvB-H); sequence ELGFDAMDLR…LNYEKTLFEE (81 aa). Residues arginine 309 and arginine 314 each contribute to the DNA site.

The protein belongs to the RuvB family. In terms of assembly, homohexamer. Forms an RuvA(8)-RuvB(12)-Holliday junction (HJ) complex. HJ DNA is sandwiched between 2 RuvA tetramers; dsDNA enters through RuvA and exits via RuvB. An RuvB hexamer assembles on each DNA strand where it exits the tetramer. Each RuvB hexamer is contacted by two RuvA subunits (via domain III) on 2 adjacent RuvB subunits; this complex drives branch migration. In the full resolvosome a probable DNA-RuvA(4)-RuvB(12)-RuvC(2) complex forms which resolves the HJ.

Its subcellular location is the cytoplasm. The enzyme catalyses ATP + H2O = ADP + phosphate + H(+). In terms of biological role, the RuvA-RuvB-RuvC complex processes Holliday junction (HJ) DNA during genetic recombination and DNA repair, while the RuvA-RuvB complex plays an important role in the rescue of blocked DNA replication forks via replication fork reversal (RFR). RuvA specifically binds to HJ cruciform DNA, conferring on it an open structure. The RuvB hexamer acts as an ATP-dependent pump, pulling dsDNA into and through the RuvAB complex. RuvB forms 2 homohexamers on either side of HJ DNA bound by 1 or 2 RuvA tetramers; 4 subunits per hexamer contact DNA at a time. Coordinated motions by a converter formed by DNA-disengaged RuvB subunits stimulates ATP hydrolysis and nucleotide exchange. Immobilization of the converter enables RuvB to convert the ATP-contained energy into a lever motion, pulling 2 nucleotides of DNA out of the RuvA tetramer per ATP hydrolyzed, thus driving DNA branch migration. The RuvB motors rotate together with the DNA substrate, which together with the progressing nucleotide cycle form the mechanistic basis for DNA recombination by continuous HJ branch migration. Branch migration allows RuvC to scan DNA until it finds its consensus sequence, where it cleaves and resolves cruciform DNA. The sequence is that of Holliday junction branch migration complex subunit RuvB from Campylobacter jejuni (strain RM1221).